We begin with the raw amino-acid sequence, 353 residues long: Photosystem II protein D1 (353 aa).

The residue at position 2 (Thr2) is an N-acetylthreonine. Thr2 carries the phosphothreonine modification. 3 consecutive transmembrane segments (helical) span residues 29–46 (YIGW…TATS), 118–133 (HFLL…EWEL), and 142–156 (WIAV…AATA). Residue His118 coordinates chlorophyll a. Residue Tyr126 participates in pheophytin a binding. Residues Asp170 and Glu189 each coordinate [CaMn4O5] cluster. The chain crosses the membrane as a helical span at residues 197–218 (FHMLGVAGVFGGSLFSAMHGSL). Chlorophyll a is bound at residue His198. A quinone is bound by residues His215 and 264–265 (SF). His215 contributes to the Fe cation binding site. Residue His272 coordinates Fe cation. A helical transmembrane segment spans residues 274–288 (FLAAWPVVGIWFTAL). 4 residues coordinate [CaMn4O5] cluster: His332, Glu333, Asp342, and Ala344. Residues 345–353 (ALEVPYLNG) constitute a propeptide that is removed on maturation.

The protein belongs to the reaction center PufL/M/PsbA/D family. PSII is composed of 1 copy each of membrane proteins PsbA, PsbB, PsbC, PsbD, PsbE, PsbF, PsbH, PsbI, PsbJ, PsbK, PsbL, PsbM, PsbT, PsbX, PsbY, PsbZ, Psb30/Ycf12, at least 3 peripheral proteins of the oxygen-evolving complex and a large number of cofactors. It forms dimeric complexes. It depends on The D1/D2 heterodimer binds P680, chlorophylls that are the primary electron donor of PSII, and subsequent electron acceptors. It shares a non-heme iron and each subunit binds pheophytin, quinone, additional chlorophylls, carotenoids and lipids. D1 provides most of the ligands for the Mn4-Ca-O5 cluster of the oxygen-evolving complex (OEC). There is also a Cl(-1) ion associated with D1 and D2, which is required for oxygen evolution. The PSII complex binds additional chlorophylls, carotenoids and specific lipids. as a cofactor. Phosphorylated in both bundle sheath and mesophyll cells, phosphorylation increases when cells are grown under high rather than low light regimes (70 vs 900 umol photons/m-2/s). In terms of processing, PSII is subject to light-induced damage, in particular to D1. Damaged protein is degraded by Deg1 and FtsH proteases and replaced. In maize mesophyll cells D1 degradation is less extensive in grana (stacked) vs stroma (unstacked) lamellae, in part due to exclusion of FtsH from the grana. D1 degradation is faster in bundle sheath cells. Post-translationally, tyr-161 forms a radical intermediate that is referred to as redox-active TyrZ, YZ or Y-Z. C-terminally processed by CTPA; processing is essential to allow assembly of the oxygen-evolving complex and thus photosynthetic growth.

The protein localises to the plastid. It is found in the chloroplast thylakoid membrane. The enzyme catalyses 2 a plastoquinone + 4 hnu + 2 H2O = 2 a plastoquinol + O2. In terms of biological role, photosystem II (PSII) is a light-driven water:plastoquinone oxidoreductase that uses light energy to abstract electrons from H(2)O, generating O(2) and a proton gradient subsequently used for ATP formation. It consists of a core antenna complex that captures photons, and an electron transfer chain that converts photonic excitation into a charge separation. The D1/D2 (PsbA/PsbD) reaction center heterodimer binds P680, the primary electron donor of PSII as well as several subsequent electron acceptors. This is Photosystem II protein D1 from Zea mays (Maize).